A 684-amino-acid polypeptide reads, in one-letter code: Glycine--tRNA ligase beta subunit (684 aa).

The protein belongs to the class-II aminoacyl-tRNA synthetase family. Tetramer of two alpha and two beta subunits.

It localises to the cytoplasm. It catalyses the reaction tRNA(Gly) + glycine + ATP = glycyl-tRNA(Gly) + AMP + diphosphate. This chain is Glycine--tRNA ligase beta subunit, found in Pseudomonas syringae pv. tomato (strain ATCC BAA-871 / DC3000).